A 243-amino-acid polypeptide reads, in one-letter code: R-spondin-2 (243 aa).

A signal peptide spans 1–21 (MQFQLFSFVLIILNCVDYSHC). 11 disulfides stabilise this stretch: cysteine 40–cysteine 46, cysteine 43–cysteine 52, cysteine 55–cysteine 74, cysteine 78–cysteine 93, cysteine 96–cysteine 104, cysteine 101–cysteine 110, cysteine 113–cysteine 124, cysteine 128–cysteine 141, cysteine 145–cysteine 187, cysteine 156–cysteine 163, and cysteine 196–cysteine 203. An FU repeat occupies 90 to 134 (MNRCSRCRIENCDSCFSRDFCIKCKSGFYSHKGQCFEECPEGFAP). The TSP type-1 domain occupies 144–204 (GCEVGPWSEW…RCKMAMRHCP (61 aa)). N-linked (GlcNAc...) asparagine glycosylation occurs at asparagine 160. Residues 202–243 (HCPGGTRTTKKKDKKNKKKKKKLLERAQEQHSVVLATDRSSQ) are disordered. The span at 209–224 (TTKKKDKKNKKKKKKL) shows a compositional bias: basic residues.

It belongs to the R-spondin family. In terms of assembly, binds heparin.

It is found in the secreted. In terms of biological role, activator of the canonical Wnt signaling pathway by acting as a ligand for lgr4-6 receptors. Upon binding to lgr4-6 (lgr4, lgr5 or lgr6), lgr4-6 associate with phosphorylated lrp6 and frizzled receptors that are activated by extracellular Wnt receptors, triggering the canonical Wnt signaling pathway to increase expression of target genes. Acts both in the canonical. Wnt/beta-catenin-dependent pathway and in non-canonical Wnt signaling pathway. Activates neural markers and promotes muscle formation. Overexpression blocks activin, nodal and BMP4 signaling, suggesting that it may negatively regulate the TGF-beta pathway. During embryonic development, plays a crucial role in limb specification, amplifying the Wnt signaling pathway independently of LGR4-6 receptors, possibly by acting as a direct antagonistic ligand to RNF43 and ZNRF3, hence governing the number of limbs an embryo should form. This is R-spondin-2 (rspo2) from Xenopus tropicalis (Western clawed frog).